Here is a 2362-residue protein sequence, read N- to C-terminus: Filaggrin-2 (2362 aa).

The interval 1–81 (MAYLLRSVVT…TEFILMIFKL (81 aa)) is S-100-like. EF-hand domains are found at residues 8 to 43 (VVTI…EFRP) and 49 to 84 (DDPD…LALA). Ca(2+) is bound by residues Asp-62, Asp-64, Asp-66, Arg-68, and Glu-73. Disordered regions lie at residues 96–238 (ASGS…GLSC) and 284–2109 (GCCR…SSIP). The segment covering 111 to 120 (EESETEEEEE) has biased composition (acidic residues). 2 stretches are compositionally biased toward basic and acidic residues: residues 159–174 (KRLE…EESR) and 189–214 (NKEK…PSRE). 2 Filaggrin repeats span residues 261–308 (GYNT…NQSC) and 373–414 (HSSC…SNGF). Polar residues-rich tracts occupy residues 284–317 (GCCR…CQSG), 342–375 (SCSQ…SHSS), and 383–395 (GATQ…QQRM). Low complexity predominate over residues 396 to 411 (SSCGHSSSSHQKGCSS). Composition is skewed to polar residues over residues 421–443 (ASGS…SSGF) and 450–469 (SGQS…SGYS). Low complexity-rich tracts occupy residues 474 to 519 (GSGQ…QSSG), 539 to 550 (GSRQSSGSEQHG), and 567 to 580 (SQSS…SGSQ). Residues 555–607 (QSSGSGKHETGPSQSSSSGHHGSGSQQHGGGSGQSTGFGEHESSSGHSSSSGQ) form a Filaggrin 3 repeat. A compositionally biased stretch (gly residues) spans 581-590 (QHGGGSGQST). The segment covering 599–618 (SGHSSSSGQHRSGSRHSSGS) has biased composition (low complexity). The span at 632–653 (GHHGSGSQQHGGGSGNSTGFGE) shows a compositional bias: gly residues. Positions 654–675 (HGSSSHPLPSSGQNESSSGQSS) are enriched in low complexity. The stretch at 672–723 (GQSSRSERHGTGSGQSSGFGQHGSGSHQSSSSGHNEYGSGQTSSSWPHGKGS) is one Filaggrin 4 repeat. The segment covering 682–694 (TGSGQSSGFGQHG) has biased composition (gly residues). Low complexity-rich tracts occupy residues 695 to 705 (SGSHQSSSSGH), 728 to 754 (GYGE…QSSS), and 780 to 798 (GYGE…WQHG). Positions 826–838 (TGSGQSLGFGQHG) are enriched in gly residues. A compositionally biased stretch (low complexity) spans 846–864 (SSGHYESVSEPSSSSWQHG). A Filaggrin 5 repeat occupies 880–927 (HGQSSSAWNHGNESGQSNGYGEHESGHGQSSSAWNHGNESGQSNGFGE). Polar residues-rich tracts occupy residues 886-896 (AWNHGNESGQS) and 912-925 (AWNH…SNGF). Residues 973-982 (ESSEGEEHSV) show a composition bias toward basic and acidic residues. A Filaggrin 6 repeat occupies 984–1035 (PRRYSGYGHGQGQAGHQQRESGYGQRGRPQGPSQDSSRQPQAGHGQPSQSGY). Residues 1014 to 1035 (GPSQDSSRQPQAGHGQPSQSGY) show a composition bias toward polar residues. The span at 1047 to 1059 (EYSEGEAHSEVSQ) shows a compositional bias: basic and acidic residues. Residues 1067–1077 (CHCHCHGQARH) are compositionally biased toward basic residues. The span at 1104 to 1121 (GPGQPSQSGSRRSPRSQP) shows a compositional bias: low complexity. Over residues 1142–1152 (SGHGHGQGQGQ) the composition is skewed to gly residues. The segment covering 1162–1174 (HGQQGRPQGPSQD) has biased composition (polar residues). Residues 1165-1210 (QGRPQGPSQDSSRQPQAGQGQPSQSGSGRSPRRSPVHPESSEGEEH) form a Filaggrin 7 repeat. Positions 1175 to 1193 (SSRQPQAGQGQPSQSGSGR) are enriched in low complexity. Phosphoserine is present on residues Ser-1198, Ser-1204, and Ser-1205. The segment covering 1220–1232 (SGHGHGQGQGQGQ) has biased composition (gly residues). Residues 1255–1273 (SSRQPQAGQGQPSQSGSGR) show a composition bias toward low complexity. A phosphoserine mark is found at Ser-1278, Ser-1284, and Ser-1285. Residues 1280 to 1334 (VHPESSEGEEHSVVPQRHSGSGHGHGQGQGQAGHQQRESVHGQPVRPEVPTQDSS) form a Filaggrin 8 repeat. Positions 1300–1310 (SGHGHGQGQGQ) are enriched in gly residues. A compositionally biased stretch (low complexity) spans 1333–1351 (SSRQPQAGQGQPSQSGSGR). Residues Ser-1356, Ser-1362, and Ser-1363 each carry the phosphoserine modification. The segment covering 1377–1396 (ESCHCHCHDQAGHQQRESVH) has biased composition (basic and acidic residues). Residues 1413 to 1436 (PQAGPGQPSQSGSRRSPRSSPVHP) show a composition bias toward low complexity. A phosphoserine mark is found at Ser-1438 and Ser-1439. Residues 1454-1464 (SGHGHGQGQGQ) show a composition bias toward gly residues. The stretch at 1474–1522 (HGQRGRPQGPTQDSSRQPQAGQGQPSQSGSGRSPRRSPVHPESSEGEEH) is one Filaggrin 9 repeat. The span at 1487-1505 (SSRQPQAGQGQPSQSGSGR) shows a compositional bias: low complexity. A phosphoserine mark is found at Ser-1510, Ser-1516, and Ser-1517. Positions 1532–1544 (SGHGHGHGQGQGQ) are enriched in gly residues. The span at 1567–1585 (SSRQPQAGQGQPSQSGSGR) shows a compositional bias: low complexity. A phosphoserine mark is found at Ser-1590, Ser-1596, and Ser-1597. Low complexity-rich tracts occupy residues 1643 to 1661 (SSRQ…GSGR) and 1683 to 1696 (QRHS…GQGQ). Residues 1698–1708 (HAEHQQRESVH) are compositionally biased toward basic and acidic residues. The Filaggrin 10 repeat unit spans residues 1723-1756 (RQPQAGQGQPSLSGSGRSPRRSPVHPESSEGEEH). Residues 1724 to 1739 (QPQAGQGQPSLSGSGR) are compositionally biased toward low complexity. A phosphoserine mark is found at Ser-1744, Ser-1750, Ser-1751, Ser-1824, Ser-1830, and Ser-1831. Residues 1801 to 1825 (SSRQPQAGQGQPSQSGSGRSPGRSP) are compositionally biased toward low complexity. Residues 1829–1848 (ESSEGEEHSVVPQRHSESGH) show a composition bias toward basic and acidic residues. Over residues 1879–1897 (SSRQPQAGQGQPSQSGSGR) the composition is skewed to low complexity. 3 positions are modified to phosphoserine: Ser-1902, Ser-1908, and Ser-1909. The segment covering 1924-1934 (SGHGHGQGQGQ) has biased composition (gly residues). The span at 1949–1975 (RPQGPSQDSSSQPQASQGQPSQSGSGR) shows a compositional bias: low complexity. Phosphoserine occurs at positions 1980, 1986, and 1987. Gly residues predominate over residues 2002-2012 (SGHGHGQGQGQ). The stretch at 2016-2070 (QQRESLHGQRGRSQSPFHPSHSIHWQSKCTISKKSSRLSGHYGRNHFQSTISGNQ) is one Filaggrin 11 repeat. Polar residues-rich tracts occupy residues 2026–2048 (GRSQ…TISK), 2061–2079 (HFQS…SSRH), and 2100–2109 (LRSNSQSSIP). A Phosphoserine modification is found at Ser-2104. Residues 2218-2259 (DDSQYILFQKHLESPSFGNQSGFSPNERQLYTCNESIDSYHL) form a Filaggrin 12 repeat.

Belongs to the S100-fused protein family. The protein in the N-terminal section; belongs to the S-100 family. Deiminated by PADI1, PADI2 or PADI3 in vitro. The deiminated form is degraded by calpain-1/CAPN1 more quickly and into shorter peptides than the intact protein. Post-translationally, may be processed by calpain-1/CAPN1.

It is found in the cytoplasm. It localises to the cytoplasmic granule. In terms of biological role, essential for normal cell-cell adhesion in the cornified cell layers. Important for proper integrity and mechanical strength of the stratum corneum of the epidermis. The sequence is that of Filaggrin-2 (Flg2) from Mus musculus (Mouse).